A 694-amino-acid polypeptide reads, in one-letter code: Probable metal-nicotianamine transporter YSL8 (694 aa).

14 helical membrane passes run 38–58 (ITVRSLVVSAVLGTFLSFIVM), 62–82 (LTSGIVPSLNVSAGLLAFFLM), 110–130 (CVISCSSIAFSGGFGTYILGM), 154–174 (LGRLIAFLFLVSFVGLFSIVP), 215–235 (ILFKSFVGSFLWSLFQWFYAA), 265–285 (VGVGMICPYIINFSLLIGSVV), 319–339 (VFISIAMIVGDGLFNFFSIVL), 393–413 (IAAAAYVLLAAISVVAIPHIF), 421–441 (VVWAYVVAPLFAFCNAYGTGL), 467–487 (GGVVAGLAACGLMMGIVSTAS), 506–526 (MFVSQVLGTGMGCIISPMVFW), 567–587 (LRFCLAFFLLAIAICALKEVA), 608–628 (FFLGSFFTIDMCVGSLVLFLW), and 643–663 (VASGLICGDGIWSLPSSILSL).

Belongs to the YSL (TC 2.A.67.2) family. As to expression, expressed in root epidermis and exoderm.

The protein resides in the membrane. Functionally, may be involved in the transport of nicotianamine-chelated metals. This Oryza sativa subsp. japonica (Rice) protein is Probable metal-nicotianamine transporter YSL8 (YSL8).